The sequence spans 260 residues: 23S rRNA (guanosine-2'-O-)-methyltransferase RlmB (260 aa).

S-adenosyl-L-methionine-binding residues include glycine 197, isoleucine 217, and leucine 226.

Belongs to the class IV-like SAM-binding methyltransferase superfamily. RNA methyltransferase TrmH family. RlmB subfamily.

It localises to the cytoplasm. The enzyme catalyses guanosine(2251) in 23S rRNA + S-adenosyl-L-methionine = 2'-O-methylguanosine(2251) in 23S rRNA + S-adenosyl-L-homocysteine + H(+). Its function is as follows. Specifically methylates the ribose of guanosine 2251 in 23S rRNA. The protein is 23S rRNA (guanosine-2'-O-)-methyltransferase RlmB of Nitrosomonas europaea (strain ATCC 19718 / CIP 103999 / KCTC 2705 / NBRC 14298).